The following is a 336-amino-acid chain: Thiamine thiazole synthase (336 aa).

Residues alanine 89, 110-111 (ES), glycine 118, and cysteine 183 contribute to the substrate site. 2,3-didehydroalanine (Cys) is present on cysteine 219. Residues aspartate 221, histidine 236, methionine 288, and 298–300 (RMG) each bind substrate.

It belongs to the THI4 family. As to quaternary structure, homooctamer. It depends on Fe cation as a cofactor. Post-translationally, during the catalytic reaction, a sulfide is transferred from Cys-219 to a reaction intermediate, generating a dehydroalanine residue.

The protein resides in the cytoplasm. It is found in the nucleus. The catalysed reaction is [ADP-thiazole synthase]-L-cysteine + glycine + NAD(+) = [ADP-thiazole synthase]-dehydroalanine + ADP-5-ethyl-4-methylthiazole-2-carboxylate + nicotinamide + 3 H2O + 2 H(+). In terms of biological role, involved in biosynthesis of the thiamine precursor thiazole. Catalyzes the conversion of NAD and glycine to adenosine diphosphate 5-(2-hydroxyethyl)-4-methylthiazole-2-carboxylic acid (ADT), an adenylated thiazole intermediate. The reaction includes an iron-dependent sulfide transfer from a conserved cysteine residue of the protein to a thiazole intermediate. The enzyme can only undergo a single turnover, which suggests it is a suicide enzyme. May have additional roles in adaptation to various stress conditions and in DNA damage tolerance. The sequence is that of Thiamine thiazole synthase from Puccinia graminis f. sp. tritici (strain CRL 75-36-700-3 / race SCCL) (Black stem rust fungus).